Consider the following 999-residue polypeptide: P3N-PIPO polyprotein (999 aa).

Positions 176-317 (LKKAVGSGKV…LDNVYTIEHY (142 aa)) constitute a Peptidase S30 domain. Catalysis depends on for P1 proteinase activity residues histidine 230, glutamate 239, and serine 271. An Involved in interaction with stylet and aphid transmission motif is present at residues 370–373 (KLSC). Residues 626-628 (PTK) carry the Involved in virions binding and aphid transmission motif. Residues 652 to 774 (MYIAKEGYCY…EGEMKHYRVG (123 aa)) enclose the Peptidase C6 domain. Residues cysteine 660 and histidine 733 each act as for helper component proteinase activity in the active site.

It belongs to the potyviridae P3N-PIPO polyprotein family. Interacts (via PIPO domain) with host PCaP1 protein; this interaction may help to anchor the movement complex to the plasma membrane from which the complex could move to the plasmodesmata. In terms of processing, potyviral RNA is expressed as two polyproteins which undergo post-translational proteolytic processing. Genome polyprotein is processed by NIa-pro, P1 and HC-pro proteinases resulting in the production of at least ten individual proteins. P3N-PIPO is cleaved by P1 and HC-pro proteinases resulting in the production of three individual proteins. The P1 proteinase and the HC-pro cleave only their respective C-termini autocatalytically.

It localises to the host cell junction. The protein resides in the host plasmodesma. The catalysed reaction is Hydrolyzes a Gly-|-Gly bond at its own C-terminus, commonly in the sequence -Tyr-Xaa-Val-Gly-|-Gly, in the processing of the potyviral polyprotein.. Required for aphid transmission and also has proteolytic activity. Only cleaves a Gly-Gly dipeptide at its own C-terminus. Interacts with virions and aphid stylets. Acts as a suppressor of RNA-mediated gene silencing, also known as post-transcriptional gene silencing (PTGS), a mechanism of plant viral defense that limits the accumulation of viral RNAs. May have RNA-binding activity. In terms of biological role, allows efficient cell to cell propagation, by bypassing the host cell wall barrier. Transports viral genome to neighboring plant cells directly through plasmosdesmata, without any budding. The sequence is that of P3N-PIPO polyprotein from Phaseolus vulgaris (Kidney bean).